A 116-amino-acid chain; its full sequence is uncharacterized protein (116 aa).

At 1 to 46 (MGDNTTVAPGTNQTLVEEDLGAQITHTLMVQIMSKLNEMLTEYQPQ) the chain is on the extracellular side. N-linked (GlcNAc...) asparagine; by host glycans are attached at residues asparagine 4 and asparagine 12. A helical transmembrane segment spans residues 47–67 (IIGIGATVLAIFVIMFISLLI). The Cytoplasmic portion of the chain corresponds to 68 to 116 (ILGCNCIRPYNFKNLKRYITGKASKSVEYQPLKMSAVNMGMDEDDEFLA).

It is found in the host membrane. This is an uncharacterized protein from Magallana gigas (Pacific oyster).